Here is a 724-residue protein sequence, read N- to C-terminus: MPLAQLKEPWPLMELVPLDPENGQTSGEEAGLQPSKDEAILKEISITHHVKAGSEKADPSQFELLKVLGQGSFGKVFLVRKVTRPDSGHLYAMKVLKKATLKVRDRVRTKMERDILADVNHPFVVKLHYAFQTEGKLYLILDFLRGGDLFTRLSKEVMFTEEDVKFYLAELALGLDHLHSLGIIYRDLKPENILLDEEGHIKLTDFGLSKEAIDHEKKAYSFCGTVEYMAPEVVNRQGHTHSADWWSYGVLMGKDRKETMTLILKAKLGMPQFLSTEAQSLLRALFKRNPANRLGSGPDGAEEIKRHIFYSTIDWNKLYRREIKPPFKPAVAQPDDTFYFDTEFTSRTPRDSPGIPPSAGAHQLFRGFSFVATGLMEDDGKPRTTQAPLHSVVQQLHGKNLVFSDGYVVKETIGVGSYSVCKRCVHKATNMEYAVKVIDKSKRDPSEEIEILLRYGQHPNIITLKDVYDDGKHVYLVTELMRGGELLDKILRQKFFSEREASFVLHTISKTVEYLHSQGVVHRDLKPSNILYVDESGNPECLRICDFGFAKQLRAENGLLMTPCYTANFVAPEVLKRQGYDEGCDIWSLGILLYTMLAGYTPFANGPSDTPEEILTRIGSGKFTLSGGNWNTVSETAKDLVSKMLHVDPHQRLTAKQVLQHPWITQKDKLPQSQLSHQDLQLVKGAMAATYSALNSSKPTPQLKPIESSILAQRRVRKLPSTTL.

Serine 54 carries the post-translational modification Phosphoserine. The Protein kinase 1 domain maps to 62-310; sequence FELLKVLGQG…AEEIKRHIFY (249 aa). ATP is bound by residues 68–76 and lysine 94; that span reads LGQGSFGKV. Aspartate 187 (proton acceptor) is an active-site residue. Serine 221 bears the Phosphoserine; by PDPK1 mark. Residue serine 296 is modified to Phosphoserine. An AGC-kinase C-terminal domain is found at 311–380; sequence STIDWNKLYR…VATGLMEDDG (70 aa). A Phosphothreonine modification is found at threonine 348. A phosphoserine mark is found at serine 352, serine 358, and serine 369. A Protein kinase 2 domain is found at 407–664; sequence YVVKETIGVG…AKQVLQHPWI (258 aa). ATP contacts are provided by residues 413 to 421 and lysine 436; that span reads IGVGSYSVC. Residue aspartate 524 is the Proton acceptor of the active site. At threonine 562 the chain carries Phosphothreonine. Serine 721 bears the Phosphoserine mark.

It belongs to the protein kinase superfamily. AGC Ser/Thr protein kinase family. S6 kinase subfamily. As to quaternary structure, forms a complex with either MAPK1/ERK2 or MAPK3/ERK1 in quiescent cells. Transiently dissociates following mitogenic stimulation. Interacts with ETV1/ER81 and FGFR1. Requires Mg(2+) as cofactor. Activated by phosphorylation at Ser-221 by PDPK1. Autophosphorylated on Ser-369, as part of the activation process. May be phosphorylated at Thr-348 and Ser-352 by MAPK1/ERK2 and MAPK3/ERK1. In terms of processing, N-terminal myristoylation results in an activated kinase in the absence of added growth factors. Intestine, thymus, and lung.

The protein localises to the nucleus. It localises to the cytoplasm. It catalyses the reaction L-seryl-[protein] + ATP = O-phospho-L-seryl-[protein] + ADP + H(+). The enzyme catalyses L-threonyl-[protein] + ATP = O-phospho-L-threonyl-[protein] + ADP + H(+). Upon extracellular signal or mitogen stimulation, phosphorylated at Thr-562 in the C-terminal kinase domain (CTKD) by MAPK1/ERK2 and MAPK3/ERK1. The activated CTKD then autophosphorylates Ser-369, allowing binding of PDPK1, which in turn phosphorylates Ser-221 in the N-terminal kinase domain (NTDK) leading to the full activation of the protein and subsequent phosphorylation of the substrates by the NTKD. Serine/threonine-protein kinase that acts downstream of ERK (MAPK1/ERK2 and MAPK3/ERK1) signaling and mediates mitogenic and stress-induced activation of the transcription factors CREB1, ETV1/ER81 and NR4A1/NUR77, regulates translation through RPS6 and EIF4B phosphorylation, and mediates cellular proliferation, survival, and differentiation by modulating mTOR signaling and repressing pro-apoptotic function of BAD and DAPK1. In fibroblast, is required for EGF-stimulated phosphorylation of CREB1, which results in the subsequent transcriptional activation of several immediate-early genes. In response to mitogenic stimulation (EGF and PMA), phosphorylates and activates NR4A1/NUR77 and ETV1/ER81 transcription factors and the cofactor CREBBP. Upon insulin-derived signal, acts indirectly on the transcription regulation of several genes by phosphorylating GSK3B at 'Ser-9' and inhibiting its activity. Phosphorylates RPS6 in response to serum or EGF via an mTOR-independent mechanism and promotes translation initiation by facilitating assembly of the pre-initiation complex. In response to insulin, phosphorylates EIF4B, enhancing EIF4B affinity for the EIF3 complex and stimulating cap-dependent translation. Is involved in the mTOR nutrient-sensing pathway by directly phosphorylating TSC2 at 'Ser-1798', which potently inhibits TSC2 ability to suppress mTOR signaling, and mediates phosphorylation of RPTOR, which regulates mTORC1 activity and may promote rapamycin-sensitive signaling independently of the PI3K/AKT pathway. Also involved in feedback regulation of mTORC1 and mTORC2 by phosphorylating DEPTOR. Mediates cell survival by phosphorylating the pro-apoptotic proteins BAD and DAPK1 and suppressing their pro-apoptotic function. Promotes the survival of hepatic stellate cells by phosphorylating CEBPB in response to the hepatotoxin carbon tetrachloride (CCl4). Mediates induction of hepatocyte prolifration by TGFA through phosphorylation of CEBPB. Is involved in cell cycle regulation by phosphorylating the CDK inhibitor CDKN1B, which promotes CDKN1B association with 14-3-3 proteins and prevents its translocation to the nucleus and inhibition of G1 progression. Phosphorylates EPHA2 at 'Ser-897', the RPS6KA-EPHA2 signaling pathway controls cell migration. In response to mTORC1 activation, phosphorylates EIF4B at 'Ser-406' and 'Ser-422' which stimulates bicarbonate cotransporter SLC4A7 mRNA translation, increasing SLC4A7 protein abundance and function. The protein is Ribosomal protein S6 kinase alpha-1 (Rps6ka1) of Mus musculus (Mouse).